Consider the following 92-residue polypeptide: Probable Fe(2+)-trafficking protein (92 aa).

The protein belongs to the Fe(2+)-trafficking protein family.

Functionally, could be a mediator in iron transactions between iron acquisition and iron-requiring processes, such as synthesis and/or repair of Fe-S clusters in biosynthetic enzymes. The protein is Probable Fe(2+)-trafficking protein of Shewanella piezotolerans (strain WP3 / JCM 13877).